Here is an 86-residue protein sequence, read N- to C-terminus: Small ribosomal subunit protein bS16 (86 aa).

The protein belongs to the bacterial ribosomal protein bS16 family.

In Bordetella petrii (strain ATCC BAA-461 / DSM 12804 / CCUG 43448), this protein is Small ribosomal subunit protein bS16.